A 226-amino-acid chain; its full sequence is Ribosomal RNA large subunit methyltransferase E (226 aa).

The tract at residues M1–R25 is disordered. Residues G82, W84, D100, D116, and D140 each contribute to the S-adenosyl-L-methionine site. K180 functions as the Proton acceptor in the catalytic mechanism.

The protein belongs to the class I-like SAM-binding methyltransferase superfamily. RNA methyltransferase RlmE family.

The protein localises to the cytoplasm. The catalysed reaction is uridine(2552) in 23S rRNA + S-adenosyl-L-methionine = 2'-O-methyluridine(2552) in 23S rRNA + S-adenosyl-L-homocysteine + H(+). Its function is as follows. Specifically methylates the uridine in position 2552 of 23S rRNA at the 2'-O position of the ribose in the fully assembled 50S ribosomal subunit. This is Ribosomal RNA large subunit methyltransferase E from Caulobacter vibrioides (strain ATCC 19089 / CIP 103742 / CB 15) (Caulobacter crescentus).